Consider the following 161-residue polypeptide: GTP-dependent dephospho-CoA kinase (161 aa).

Residues Asp37, Ile38, Asp56, Lys58, Glu112, and Asp135 each coordinate GTP.

It belongs to the GTP-dependent DPCK family.

The enzyme catalyses 3'-dephospho-CoA + GTP = GDP + CoA + H(+). It functions in the pathway cofactor biosynthesis; coenzyme A biosynthesis. Its function is as follows. Catalyzes the GTP-dependent phosphorylation of the 3'-hydroxyl group of dephosphocoenzyme A to form coenzyme A (CoA). This is GTP-dependent dephospho-CoA kinase from Methanococcus aeolicus (strain ATCC BAA-1280 / DSM 17508 / OCM 812 / Nankai-3).